The following is an 873-amino-acid chain: Alanine--tRNA ligase (873 aa).

Residues histidine 562, histidine 566, cysteine 663, and histidine 667 each coordinate Zn(2+).

This sequence belongs to the class-II aminoacyl-tRNA synthetase family. Zn(2+) serves as cofactor.

The protein resides in the cytoplasm. It carries out the reaction tRNA(Ala) + L-alanine + ATP = L-alanyl-tRNA(Ala) + AMP + diphosphate. Its function is as follows. Catalyzes the attachment of alanine to tRNA(Ala) in a two-step reaction: alanine is first activated by ATP to form Ala-AMP and then transferred to the acceptor end of tRNA(Ala). Also edits incorrectly charged Ser-tRNA(Ala) and Gly-tRNA(Ala) via its editing domain. This chain is Alanine--tRNA ligase, found in Bordetella petrii (strain ATCC BAA-461 / DSM 12804 / CCUG 43448).